Consider the following 23-residue polypeptide: Conolysin-Mt1 (23 aa).

At serine 22 the chain carries Serine amide.

As to expression, expressed by the venom duct.

The protein localises to the secreted. Functionally, this cytolytic peptide has ability to disrupt the integrity of cell membranes from both prokaryotes and eukaryotes. It permeabilizes both negatively charged prokaryotic (PE:PG) and zwitterionic eukaryotic (PC:cholesterol) model membranes. It has potent hemolytic activity on human erythrocytes and exhibits low antimicrobial activity against the Gram-negative bacterium E.coli (MIC&gt;50 uM) and the Gram-positive bacterium S.aureus (MIC=25-50 uM). Intracranial injection causes mice to shuffle backward until the encounter an obstacle, at which time the mouse jump into the air. The backward shuffle is reminiscent to the signature dance 'moonwalk' that gained widespread popularity after being performed by Michael Jackson. The chain is Conolysin-Mt1 from Conus mustelinus (Weasel cone).